The primary structure comprises 53 residues: UPF0391 membrane protein Patl_1732 (53 aa).

Helical transmembrane passes span 4–24 (WAVI…GGIA) and 28–48 (AGIA…SVVM).

The protein belongs to the UPF0391 family.

It localises to the cell membrane. The protein is UPF0391 membrane protein Patl_1732 of Pseudoalteromonas atlantica (strain T6c / ATCC BAA-1087).